The sequence spans 442 residues: MRTIAIVGKPNVGKSSLFNRILMRRKSIVDDQPGVTRDRIYDVGNWLTRDFMLIDTGGIISSEDTYQDNINEQVLFAINEANTIIFLVSAKDGINNDDKKIAKMLKEKAKDKKVILVVNKVESEKYYFNEGELYSFGFGKFFKISAEHGIGMGDLLDELVKDMPIQNALDQQERFKFCIIGRPNVGKSSLTNTILGEQRMIVNAEAGSTRDSIDNDFSYHNKKYTIIDTAGVRRKGKIVEAVEKYAVLRTQKAIERSQLILLVLDGSEPFKEQDEVVGGLAYDANIPTIIVVNKWDNIVNKNSHTMEMVKKQIRSQFKYLSWAPIVFISALDNKRIHTIFETIELVREQAMRKVATSLLNDVVIKANAFQEPPPFKGGRISISYVVQVQSQIPTFVLKCNNPKFLHFSYARYIENEIRKAFGFDSVPITLYWQDKNKKLRGE.

EngA-type G domains lie at 2-167 (RTIA…PIQN) and 175-351 (FKFC…EQAM). GTP-binding positions include 8-15 (GKPNVGKS), 55-59 (DTGGI), 119-122 (NKVE), 181-188 (GRPNVGKS), 228-232 (DTAGV), and 293-296 (NKWD). The KH-like domain maps to 352–436 (RKVATSLLND…PITLYWQDKN (85 aa)).

It belongs to the TRAFAC class TrmE-Era-EngA-EngB-Septin-like GTPase superfamily. EngA (Der) GTPase family. As to quaternary structure, associates with the 50S ribosomal subunit.

GTPase that plays an essential role in the late steps of ribosome biogenesis. The polypeptide is GTPase Der (Ureaplasma urealyticum serovar 10 (strain ATCC 33699 / Western)).